The sequence spans 388 residues: Cytochrome b (388 aa).

4 consecutive transmembrane segments (helical) span residues 32-52 (FGSLLGFCLVIQIVTGVTLAM), 76-98 (WLIRYLHSNTASAFFFLVYLHVG), 113-133 (TWTIGTIILVLMMATAFLGYV), and 179-199 (FFALHFVLPFVLAALVLMHLI). Heme b is bound by residues His82 and His96. Heme b is bound by residues His183 and His197. His202 is an a ubiquinone binding site. 4 helical membrane passes run 226–246 (FIFKDLITIFLFIIVLSIFIF), 290–310 (LLGVIAMFSAILIIMIMPITD), 322–342 (LSKITFYIFVANFLVLMQLGA), and 349–369 (FIEFGQISTVLYFSHFLIIVP).

The protein belongs to the cytochrome b family. In terms of assembly, fungal cytochrome b-c1 complex contains 10 subunits; 3 respiratory subunits, 2 core proteins and 5 low-molecular weight proteins. Cytochrome b-c1 complex is a homodimer. The cofactor is heme b.

Its subcellular location is the mitochondrion inner membrane. In terms of biological role, component of the ubiquinol-cytochrome c reductase complex (complex III or cytochrome b-c1 complex) that is part of the mitochondrial respiratory chain. The b-c1 complex mediates electron transfer from ubiquinol to cytochrome c. Contributes to the generation of a proton gradient across the mitochondrial membrane that is then used for ATP synthesis. This Zymoseptoria tritici (Speckled leaf blotch fungus) protein is Cytochrome b (cob).